Here is a 256-residue protein sequence, read N- to C-terminus: Small ribosomal subunit protein eS1 (256 aa).

Residue A2 is modified to N-acetylalanine; partial.

This sequence belongs to the eukaryotic ribosomal protein eS1 family. Component of the small ribosomal subunit. Mature ribosomes consist of a small (40S) and a large (60S) subunit. The 40S subunit contains about 33 different proteins and 1 molecule of RNA (18S). The 60S subunit contains about 49 different proteins and 3 molecules of RNA (25S, 5.8S and 5S).

The protein resides in the cytoplasm. This Komagataella phaffii (strain GS115 / ATCC 20864) (Yeast) protein is Small ribosomal subunit protein eS1.